The primary structure comprises 452 residues: Phosphatidylserine synthase 2 (452 aa).

The Cytoplasmic portion of the chain corresponds to 1-35; the sequence is MAKGEWKRSGADDLPLPGRSECEVFDDGTNTFFWR. Residues 36–56 form a helical membrane-spanning segment; the sequence is AHTVTVLFILTCALVYVTLLE. Over 57-69 the chain is Lumenal; it reads ETPHDTAYNTKRG. Residues 70–90 traverse the membrane as a helical segment; the sequence is IVASILVFLCFGVTQAKDGPF. At 91–99 the chain is on the cytoplasmic side; it reads TRPHPAYWR. The helical transmembrane segment at 100 to 120 threads the bilayer; it reads FWLCVSVVYELFLIFILFQTV. The Lumenal segment spans residues 121–286; the sequence is HDGRQFMKYI…EWRPASNLRR (166 aa). Residues 287 to 307 traverse the membrane as a helical segment; that stretch reads WLAVLGIIFMFLLAELNTFYL. Residue lysine 308 is a topological domain, cytoplasmic. A helical membrane pass occupies residues 309-329; it reads FVMWMPPEHYLVLFRLVFFVN. At 330 to 349 the chain is on the lumenal side; that stretch reads VGGVAMREIYDFMDDPKFHK. The helical transmembrane segment at 350-370 threads the bilayer; sequence KLGQQAWIVAAITVTEFLIVV. Residues 371 to 376 lie on the Cytoplasmic side of the membrane; it reads KYDPNT. A helical membrane pass occupies residues 377–397; the sequence is IMLPIPFFITQCWILGIALIL. Over 398-452 the chain is Lumenal; it reads VWTLWRFFIRDITLRYKETRRRRQEVSSERDGSSSAPSGRSKLNGSMDSVRHRKS. The segment at 419-452 is disordered; the sequence is RRQEVSSERDGSSSAPSGRSKLNGSMDSVRHRKS. A compositionally biased stretch (polar residues) spans 430–444; sequence SSSAPSGRSKLNGSM.

It belongs to the phosphatidyl serine synthase family.

It is found in the endoplasmic reticulum membrane. It carries out the reaction a 1,2-diacyl-sn-glycero-3-phosphoethanolamine + L-serine = a 1,2-diacyl-sn-glycero-3-phospho-L-serine + ethanolamine. The enzyme catalyses 1-hexadecanoyl-2-(9Z-octadecenoyl)-sn-glycero-3-phosphoethanolamine + L-serine = 1-hexadecanoyl-2-(9Z-octadecenoyl)-sn-glycero-3-phospho-L-serine + ethanolamine. The catalysed reaction is 1-hexadecanoyl-2-(4Z,7Z,10Z,13Z,16Z,19Z-docosahexaenoyl)-sn-glycero-3-phosphoethanolamine + L-serine = 1-hexadecanoyl-2-(4Z,7Z,10Z,13Z,16Z,19Z-docosahexaenoyl)-sn-glycero-3-phosphoserine + ethanolamine. It catalyses the reaction 1-octadecanoyl-2-(5Z,8Z,11Z,14Z)-eicosatetraenoyl-sn-glycero-3-phosphoethanolamine + L-serine = 1-octadecanoyl-2-(5Z,8Z,11Z,14Z)-eicosatetraenoyl-sn-glycero-3-phosphoserine + ethanolamine. It carries out the reaction 1-octadecanoyl-2-(4Z,7Z,10Z,13Z,16Z,19Z-docosahexaenoyl)-sn-glycero-3-phosphoethanolamine + L-serine = 1-octadecanoyl-2-(4Z,7Z,10Z,13Z,16Z,19Z-docosahexaenoyl)-sn-glycero-3-phosphoserine + ethanolamine. The enzyme catalyses 1-(1Z-octadecenyl)-2-(4Z,7Z,10Z,13Z,16Z,19Z-docosahexaenoyl)-sn-glycero-3-phosphoethanolamine + L-serine = 1-(1Z-octadecenyl)-2-(4Z,7Z,10Z,13Z,16Z,19Z-docosahexaenoyl)-sn-glycero-3-phospho-L-serine + ethanolamine. The catalysed reaction is 1-octadecanoyl-2-(9Z-octadecenoyl)-sn-glycero-3-phosphoethanolamine + L-serine = 1-octadecanoyl-2-(9Z-octadecenoyl)-sn-glycero-3-phospho-L-serine + ethanolamine. It catalyses the reaction 1-(1Z-octadecenyl)-2-(9Z-octadecenoyl)-sn-glycero-3-phosphoethanolamine + L-serine = 1-(1Z-octadecenyl)-2-(9Z-octadecenoyl)-sn-glycero-3-phospho-L-serine + ethanolamine. It carries out the reaction 1-(1Z-octadecenyl)-2-(5Z,8Z,11Z,14Z- eicosatetraenoyl)-sn-glycero-3-phosphoethanolamine + L-serine = 1-(1Z-octadecenyl)-2-(5Z,8Z,11Z,14Z-eicosatetraenoyl)-sn-glycero-3-phospho-L-serine + ethanolamine. Its pathway is phospholipid metabolism; phosphatidylserine biosynthesis. Catalyzes a base-exchange reaction in which the polar head group of phosphatidylethanolamine (PE) or phosphatidylcholine (PC) is replaced by L-serine. Catalyzes the conversion of phosphatatidylethanolamine and does not act on phosphatidylcholine. Can utilize both phosphatidylethanolamine (PE) plasmalogen and diacyl PE as substrate and the latter is six times better utilized, indicating the importance of an ester linkage at the sn-1 position. Although it shows no sn-1 fatty acyl preference, exhibits significant preference towards docosahexaenoic acid (22:6n-3) compared with 18:1 or 20:4 at the sn-2 position. The polypeptide is Phosphatidylserine synthase 2 (ptdss2) (Danio rerio (Zebrafish)).